A 320-amino-acid polypeptide reads, in one-letter code: Protease HtpX homolog (320 aa).

The next 2 helical transmembrane spans lie at 6-26 (TAMLLAFMTALFMFVGFLIGG) and 28-48 (AGMMIAFVIAAGMNFFSYWNS). His130 contacts Zn(2+). Glu131 is a catalytic residue. His134 contributes to the Zn(2+) binding site. A run of 2 helical transmembrane segments spans residues 145-165 (ITATLAGAISMLGNFAFFFGG) and 173-193 (PLGFVGVLVAMIVAPLAAMLV). Position 202 (Glu202) interacts with Zn(2+). Residues 281–320 (GGMNVSTPPVRAANPSRKSRSVPDTGLGRGGSQPPKGPWS) are disordered.

The protein belongs to the peptidase M48B family. Zn(2+) serves as cofactor.

The protein localises to the cell inner membrane. This Rhizobium leguminosarum bv. trifolii (strain WSM2304) protein is Protease HtpX homolog.